Reading from the N-terminus, the 557-residue chain is Dihydroxy-acid dehydratase (557 aa).

C50 is a binding site for [2Fe-2S] cluster. D82 is a binding site for Mg(2+). [2Fe-2S] cluster is bound at residue C123. Mg(2+) contacts are provided by D124 and K125. Residue K125 is modified to N6-carboxylysine. C195 provides a ligand contact to [2Fe-2S] cluster. E447 lines the Mg(2+) pocket. S473 acts as the Proton acceptor in catalysis.

The protein belongs to the IlvD/Edd family. Homodimer. [2Fe-2S] cluster is required as a cofactor. It depends on Mg(2+) as a cofactor.

The catalysed reaction is (2R)-2,3-dihydroxy-3-methylbutanoate = 3-methyl-2-oxobutanoate + H2O. It carries out the reaction (2R,3R)-2,3-dihydroxy-3-methylpentanoate = (S)-3-methyl-2-oxopentanoate + H2O. It functions in the pathway amino-acid biosynthesis; L-isoleucine biosynthesis; L-isoleucine from 2-oxobutanoate: step 3/4. It participates in amino-acid biosynthesis; L-valine biosynthesis; L-valine from pyruvate: step 3/4. Functionally, functions in the biosynthesis of branched-chain amino acids. Catalyzes the dehydration of (2R,3R)-2,3-dihydroxy-3-methylpentanoate (2,3-dihydroxy-3-methylvalerate) into 2-oxo-3-methylpentanoate (2-oxo-3-methylvalerate) and of (2R)-2,3-dihydroxy-3-methylbutanoate (2,3-dihydroxyisovalerate) into 2-oxo-3-methylbutanoate (2-oxoisovalerate), the penultimate precursor to L-isoleucine and L-valine, respectively. The protein is Dihydroxy-acid dehydratase of Herminiimonas arsenicoxydans.